Here is a 1104-residue protein sequence, read N- to C-terminus: tRNA ligase 1 (1104 aa).

Residue Lys-152 is the N6-AMP-lysine intermediate of the active site.

It belongs to the TRL1 family. It depends on Mg(2+) as a cofactor. In terms of tissue distribution, mainly expressed in proliferating cells and tissues such as root meristems, the vasculature of developing plantlets, flowers and elongating tissue.

The protein localises to the nucleus. The protein resides in the cytoplasm. It carries out the reaction ATP + (ribonucleotide)n-3'-hydroxyl + 5'-phospho-(ribonucleotide)m = (ribonucleotide)n+m + AMP + diphosphate.. Requires the presence of NTP, preferentially ATP rather than dATP, UTP, CTP and GTP, respectively, to mediate ribonucleotide 5'-phosphorylation. Its function is as follows. Essential component of stress-response pathways entailing repair of RNA breaks with 2',3'-cyclic phosphate and 5'-OH ends. Tri-functional enzyme that repairs RNA breaks with 2',3'-cyclic-PO(4) and 5'-OH ends. The ligation activity requires three sequential enzymatic activities: opening of the 2'3'-cyclic phosphodiester bond of the 5' half-tRNA leaving a 2'-phosphomonoester (CPDase activity), phosphorylation of the 5' terminus of the 3' half-tRNA in the presence of ATP (kinase activity) and ligation of the two tRNA halves in an ATP-dependent reaction (ligase activity). Deficient in transferring AMP to pRNA(OH) to form AppRNA(OH) but proficient at sealing pre-adenylylated AppRNA(OH). CPDase and kinase reactions are almost insensitive to RNA length, whereas the ligase activity decreases with shorter RNA size. Can also splice DNA ended by a single 3'-terminal ribonucleoside 2',3'-cyclic-PO(4). Binds to mRNA, mature and immature. Exhibits tRNA ligase activity in vitro. Required for the splicing of precursor tRNA molecules containing introns. Can circularize an intron cleaved from a pre-tRNA by splicing endonuclease in vitro. Seems not involved in unfolded protein response (UPR) in the endoplasmic reticulum. Involved in auxin signaling and polar transport during organ morphogenesis. The polypeptide is tRNA ligase 1 (Arabidopsis thaliana (Mouse-ear cress)).